A 164-amino-acid chain; its full sequence is Phosphopantetheine adenylyltransferase (164 aa).

Thr10 provides a ligand contact to substrate. Residues 10–11 (TF) and His18 contribute to the ATP site. Positions 44, 76, and 90 each coordinate substrate. ATP contacts are provided by residues 91 to 93 (GLR), Glu101, and 126 to 132 (YAFISSS).

Belongs to the bacterial CoaD family. As to quaternary structure, homohexamer. Mg(2+) serves as cofactor.

It is found in the cytoplasm. The catalysed reaction is (R)-4'-phosphopantetheine + ATP + H(+) = 3'-dephospho-CoA + diphosphate. It participates in cofactor biosynthesis; coenzyme A biosynthesis; CoA from (R)-pantothenate: step 4/5. In terms of biological role, reversibly transfers an adenylyl group from ATP to 4'-phosphopantetheine, yielding dephospho-CoA (dPCoA) and pyrophosphate. The chain is Phosphopantetheine adenylyltransferase from Halorhodospira halophila (strain DSM 244 / SL1) (Ectothiorhodospira halophila (strain DSM 244 / SL1)).